The primary structure comprises 311 residues: Delta(1)-pyrroline-2-carboxylate reductase 2 (311 aa).

This sequence belongs to the ornithine cyclodeaminase/mu-crystallin family.

It carries out the reaction L-proline + NAD(+) = 1-pyrroline-2-carboxylate + NADH + H(+). It catalyses the reaction L-proline + NADP(+) = 1-pyrroline-2-carboxylate + NADPH + H(+). In terms of biological role, catalyzes the reduction of Delta(1)-pyrroline-2-carboxylate (Pyr2C) to L-proline, using preferentially NADPH over NADH as the electron donor. May be involved in a degradation pathway that converts trans-3-hydroxy-L-proline (t3LHyp) to L-proline. The sequence is that of Delta(1)-pyrroline-2-carboxylate reductase 2 from Burkholderia ambifaria (strain ATCC BAA-244 / DSM 16087 / CCUG 44356 / LMG 19182 / AMMD) (Burkholderia cepacia (strain AMMD)).